Consider the following 394-residue polypeptide: Elongation factor Tu (394 aa).

Residues 10–204 (KPHVNIGTIG…AVDSYIPQPV (195 aa)) form the tr-type G domain. The G1 stretch occupies residues 19–26 (GHVDHGKT). 19–26 (GHVDHGKT) contributes to the GTP binding site. Mg(2+) is bound at residue Thr-26. Positions 60–64 (GITIS) are G2. The segment at 81 to 84 (DCPG) is G3. Residues 81-85 (DCPGH) and 136-139 (NKID) contribute to the GTP site. The interval 136 to 139 (NKID) is G4. Residues 174 to 176 (SAL) form a G5 region.

This sequence belongs to the TRAFAC class translation factor GTPase superfamily. Classic translation factor GTPase family. EF-Tu/EF-1A subfamily. In terms of assembly, monomer.

Its subcellular location is the cytoplasm. It carries out the reaction GTP + H2O = GDP + phosphate + H(+). Its function is as follows. GTP hydrolase that promotes the GTP-dependent binding of aminoacyl-tRNA to the A-site of ribosomes during protein biosynthesis. The polypeptide is Elongation factor Tu (Rickettsia conorii (strain ATCC VR-613 / Malish 7)).